The primary structure comprises 436 residues: Ribosomal protein uS12 methylthiotransferase RimO (436 aa).

The MTTase N-terminal domain occupies 2-117 (KNVGIISLGC…IAEVIEKIEK (116 aa)). [4Fe-4S] cluster contacts are provided by cysteine 11, cysteine 47, cysteine 80, cysteine 154, cysteine 158, and cysteine 161. Residues 140-369 (TTPNYYAYLK…MEIQKEISYQ (230 aa)) form the Radical SAM core domain. Positions 372-436 (LSKVGKQLEV…AYEYDLVGEY (65 aa)) constitute a TRAM domain.

Belongs to the methylthiotransferase family. RimO subfamily. Requires [4Fe-4S] cluster as cofactor.

It localises to the cytoplasm. The enzyme catalyses L-aspartate(89)-[ribosomal protein uS12]-hydrogen + (sulfur carrier)-SH + AH2 + 2 S-adenosyl-L-methionine = 3-methylsulfanyl-L-aspartate(89)-[ribosomal protein uS12]-hydrogen + (sulfur carrier)-H + 5'-deoxyadenosine + L-methionine + A + S-adenosyl-L-homocysteine + 2 H(+). Catalyzes the methylthiolation of an aspartic acid residue of ribosomal protein uS12. This is Ribosomal protein uS12 methylthiotransferase RimO from Thermoanaerobacter sp. (strain X514).